A 317-amino-acid chain; its full sequence is MPVQGSQRRLLGSLNSTPTAPPHLGLAANQTGARCLEVSIPDGLFLSLGLVSLVENVLVVTAIAKNRNLHSPMYCFICCLALSDLLVSGSNMLETAVILLLEAGALAARAAVVQQLDNVIDVITCSSMLSSLCFLGAIAVDRYISIFYALRYHSIVTLPRARRAVAAIWVASVLFSMLFIAYYDHAAVLLCLVVFFLAMLVLMAVLYIHMLVRACQHAQGIARLHKRQRPAHQGFGLKGAATLTILLGIFFLCWGPFFLHLTLIVLCPQHPTCSCIFKNFNLFLALIICNAIIDPLIYAFRSQELRRTLKEVLLCSW.

The Extracellular segment spans residues 1–37 (MPVQGSQRRLLGSLNSTPTAPPHLGLAANQTGARCLE). An N-linked (GlcNAc...) asparagine glycan is attached at N29. A helical transmembrane segment spans residues 38–63 (VSIPDGLFLSLGLVSLVENVLVVTAI). The Cytoplasmic portion of the chain corresponds to 64 to 72 (AKNRNLHSP). A helical transmembrane segment spans residues 73–93 (MYCFICCLALSDLLVSGSNML). Residues 94-118 (ETAVILLLEAGALAARAAVVQQLDN) lie on the Extracellular side of the membrane. The helical transmembrane segment at 119–140 (VIDVITCSSMLSSLCFLGAIAV) threads the bilayer. Over 141-163 (DRYISIFYALRYHSIVTLPRARR) the chain is Cytoplasmic. The helical transmembrane segment at 164 to 183 (AVAAIWVASVLFSMLFIAYY) threads the bilayer. The Extracellular portion of the chain corresponds to 184–191 (DHAAVLLC). A helical membrane pass occupies residues 192-211 (LVVFFLAMLVLMAVLYIHML). Over 212–240 (VRACQHAQGIARLHKRQRPAHQGFGLKGA) the chain is Cytoplasmic. A helical membrane pass occupies residues 241-266 (ATLTILLGIFFLCWGPFFLHLTLIVL). Topologically, residues 267–279 (CPQHPTCSCIFKN) are extracellular. A helical membrane pass occupies residues 280-300 (FNLFLALIICNAIIDPLIYAF). The Cytoplasmic portion of the chain corresponds to 301 to 317 (RSQELRRTLKEVLLCSW). C315 is lipidated: S-palmitoyl cysteine.

The protein belongs to the G-protein coupled receptor 1 family. In terms of assembly, interacts with MGRN1, but does not undergo MGRN1-mediated ubiquitination; this interaction competes with GNAS-binding and thus inhibits agonist-induced cAMP production. Interacts with OPN3; the interaction results in a decrease in MC1R-mediated cAMP signaling and ultimately a decrease in melanin production in melanocytes.

The protein localises to the cell membrane. Functionally, receptor for MSH (alpha, beta and gamma) and ACTH. The activity of this receptor is mediated by G proteins which activate adenylate cyclase. Mediates melanogenesis, the production of eumelanin (black/brown) and phaeomelanin (red/yellow), via regulation of cAMP signaling in melanocytes. The sequence is that of Melanocyte-stimulating hormone receptor (MC1R) from Cercopithecus diana (Diana monkey).